The chain runs to 383 residues: Dual-specificity RNA methyltransferase RlmN (383 aa).

Glu95 functions as the Proton acceptor in the catalytic mechanism. The 249-residue stretch at 101–349 (EETRGTLCVS…TTVRKTRGDD (249 aa)) folds into the Radical SAM core domain. Cys108 and Cys354 are disulfide-bonded. The [4Fe-4S] cluster site is built by Cys115, Cys119, and Cys122. S-adenosyl-L-methionine-binding positions include 180–181 (GE), Ser212, 234–236 (SLH), and Asn311. Residue Cys354 is the S-methylcysteine intermediate of the active site.

This sequence belongs to the radical SAM superfamily. RlmN family. The cofactor is [4Fe-4S] cluster.

Its subcellular location is the cytoplasm. The catalysed reaction is adenosine(2503) in 23S rRNA + 2 reduced [2Fe-2S]-[ferredoxin] + 2 S-adenosyl-L-methionine = 2-methyladenosine(2503) in 23S rRNA + 5'-deoxyadenosine + L-methionine + 2 oxidized [2Fe-2S]-[ferredoxin] + S-adenosyl-L-homocysteine. It carries out the reaction adenosine(37) in tRNA + 2 reduced [2Fe-2S]-[ferredoxin] + 2 S-adenosyl-L-methionine = 2-methyladenosine(37) in tRNA + 5'-deoxyadenosine + L-methionine + 2 oxidized [2Fe-2S]-[ferredoxin] + S-adenosyl-L-homocysteine. Functionally, specifically methylates position 2 of adenine 2503 in 23S rRNA and position 2 of adenine 37 in tRNAs. m2A2503 modification seems to play a crucial role in the proofreading step occurring at the peptidyl transferase center and thus would serve to optimize ribosomal fidelity. The chain is Dual-specificity RNA methyltransferase RlmN from Paraburkholderia xenovorans (strain LB400).